Here is a 228-residue protein sequence, read N- to C-terminus: Adapter protein MecA (228 aa).

A disordered region spans residues 79–98 (GQKNDDSAADQTDDEGTDTQ). The span at 85 to 95 (SAADQTDDEGT) shows a compositional bias: acidic residues.

This sequence belongs to the MecA family. As to quaternary structure, homodimer.

Enables the recognition and targeting of unfolded and aggregated proteins to the ClpC protease or to other proteins involved in proteolysis. The polypeptide is Adapter protein MecA (Lacticaseibacillus casei (strain BL23) (Lactobacillus casei)).